Here is a 397-residue protein sequence, read N- to C-terminus: F-box protein At3g28330 (397 aa).

Residues 6-56 (KKDMDFLTEDLWEIILARLPLKSIITTPKLVCKVWKSIIESRCFRDLFQSL) form the F-box domain.

This chain is F-box protein At3g28330, found in Arabidopsis thaliana (Mouse-ear cress).